Here is a 520-residue protein sequence, read N- to C-terminus: Nonsense-mediated mRNA decay factor SMG9 (520 aa).

The tract at residues 1-143 (MSESGHSQPG…KGEKEGQRPT (143 aa)) is disordered. At serine 2 the chain carries N-acetylserine. A phosphoserine mark is found at serine 2, serine 4, serine 7, serine 32, and serine 53. Positions 36-53 (GRERDYIAPWERERRDGS) are enriched in basic and acidic residues. Residues 78 to 94 (QPPPPAAPAAPPAPAPL) are compositionally biased toward pro residues. Positions 109 to 121 (GPAATTSTSTPEG) are enriched in low complexity. A compositionally biased stretch (pro residues) spans 122 to 133 (TAPPPPAAPVPP). At serine 451 the chain carries Phosphoserine.

It belongs to the SMG9 family. Self-associates to form homodimers and forms heterodimers with SMG8; these assembly forms may represent SMG1C intermediate forms. Component of the SMG1C complex composed of SMG1, SMG8 and SMG9. Self-associates to form homodimers and forms heterodimers with SMG8; these assembly forms may represent SMG1C intermediate forms. Interacts with DHX34; the interaction is RNA-independent. Post-translationally, phosphorylated by SMG1.

In terms of biological role, involved in nonsense-mediated decay (NMD) of mRNAs containing premature stop codons. Is recruited by release factors to stalled ribosomes together with SMG1 and SMG8 (forming the SMG1C protein kinase complex) and, in the SMG1C complex, is required for the efficient association between SMG1 and SMG8. Plays a role in brain, heart, and eye development. The polypeptide is Nonsense-mediated mRNA decay factor SMG9 (Bos taurus (Bovine)).